A 233-amino-acid polypeptide reads, in one-letter code: MEGEEKQQQHKTEDDGIACVAERKVEIKNEKSPGKSTQHPKPCVDRRRVNYAKFIHTNARTYNEPVPYIDNKGPEKQRKWWFHNEAPKHVSQPSYDTKSVQRSDFQKPACPLVLPVKHSRMQKPSCGIVPLTSLDVSGEHENNFVEYISFIHQYDARRTPNEPIKGKKHGTFVQREIKLGAMPIVPKAPEVLLNTLESGSSEQPQKTDKGNSSGDKVTSPGLCQQNSQELLET.

2 stretches are compositionally biased toward basic and acidic residues: residues 1–14 and 21–33; these read MEGEEKQQQHKTED and AERKVEIKNEKSP. The tract at residues 1–45 is disordered; it reads MEGEEKQQQHKTEDDGIACVAERKVEIKNEKSPGKSTQHPKPCVD. Residues 127 to 159 form a mn region; the sequence is GIVPLTSLDVSGEHENNFVEYISFIHQYDARRT. Positions 192–233 are disordered; that stretch reads LLNTLESGSSEQPQKTDKGNSSGDKVTSPGLCQQNSQELLET. Polar residues predominate over residues 195-233; sequence TLESGSSEQPQKTDKGNSSGDKVTSPGLCQQNSQELLET.

The protein localises to the cell projection. It localises to the cilium. The chain is Ciliary microtubule inner protein 6 (Cimip6) from Mus musculus (Mouse).